Here is a 434-residue protein sequence, read N- to C-terminus: Enolase (434 aa).

Position 163 (Gln-163) interacts with (2R)-2-phosphoglycerate. The active-site Proton donor is Glu-205. The Mg(2+) site is built by Asp-242, Glu-291, and Asp-318. Positions 343, 372, 373, and 394 each coordinate (2R)-2-phosphoglycerate. Catalysis depends on Lys-343, which acts as the Proton acceptor.

It belongs to the enolase family. Mg(2+) is required as a cofactor.

The protein localises to the cytoplasm. Its subcellular location is the secreted. It is found in the cell surface. It catalyses the reaction (2R)-2-phosphoglycerate = phosphoenolpyruvate + H2O. The protein operates within carbohydrate degradation; glycolysis; pyruvate from D-glyceraldehyde 3-phosphate: step 4/5. In terms of biological role, catalyzes the reversible conversion of 2-phosphoglycerate (2-PG) into phosphoenolpyruvate (PEP). It is essential for the degradation of carbohydrates via glycolysis. The polypeptide is Enolase (Streptococcus intermedius).